The chain runs to 218 residues: 25.3 kDa vesicle transport protein SEC22-1 (218 aa).

The Cytoplasmic portion of the chain corresponds to 1–192; that stretch reads MVKMTLIARV…DKAKDLNRQA (192 aa). The region spanning 6–120 is the Longin domain; sequence LIARVTDGLP…YAFIKFDTFI (115 aa). The 61-residue stretch at 135 to 195 folds into the v-SNARE coiled-coil homology domain; the sequence is NIAKLNDELY…KDLNRQALIR (61 aa). A helical; Anchor for type IV membrane protein membrane pass occupies residues 193–213; that stretch reads LIRKWAPVAIVFGVVFLLFWV. Over 214 to 218 the chain is Vesicular; that stretch reads KNKLW.

It belongs to the synaptobrevin family. As to quaternary structure, interacts with SEC24A. As to expression, mainly expressed in flowers and siliques, to a lower extent in seedlings, and barely in roots and leaves.

Its subcellular location is the golgi apparatus membrane. The protein resides in the endoplasmic reticulum membrane. In terms of biological role, V-SNARE involved in vesicle trafficking from the ER to the Golgi complex and required for early secretion. Involved in endoplasmic reticulum (ER) biogenesis and functions as well as for Golgi-stack integrity. Essential for gametophytes development. Involved in cesium Cs(+) accumulation, a non-essential cation. This is 25.3 kDa vesicle transport protein SEC22-1 from Arabidopsis thaliana (Mouse-ear cress).